We begin with the raw amino-acid sequence, 912 residues long: Protein translocase subunit SecA (912 aa).

ATP-binding positions include glutamine 87, 105-109 (GEGKT), and aspartate 508. Residues 864–912 (AEEEVEQMQGGNAPVPVSQVTRDEPKVGRNDPCPCGSGKKYKHCHGQLS) are disordered. Residues cysteine 896, cysteine 898, cysteine 907, and histidine 908 each coordinate Zn(2+). A compositionally biased stretch (basic residues) spans 902 to 912 (KKYKHCHGQLS).

This sequence belongs to the SecA family. Monomer and homodimer. Part of the essential Sec protein translocation apparatus which comprises SecA, SecYEG and auxiliary proteins SecDF-YajC and YidC. It depends on Zn(2+) as a cofactor.

It localises to the cell inner membrane. The protein resides in the cytoplasm. The enzyme catalyses ATP + H2O + cellular proteinSide 1 = ADP + phosphate + cellular proteinSide 2.. In terms of biological role, part of the Sec protein translocase complex. Interacts with the SecYEG preprotein conducting channel. Has a central role in coupling the hydrolysis of ATP to the transfer of proteins into and across the cell membrane, serving both as a receptor for the preprotein-SecB complex and as an ATP-driven molecular motor driving the stepwise translocation of polypeptide chains across the membrane. The polypeptide is Protein translocase subunit SecA (Xanthomonas euvesicatoria pv. vesicatoria (strain 85-10) (Xanthomonas campestris pv. vesicatoria)).